A 273-amino-acid polypeptide reads, in one-letter code: Putative phosphoenolpyruvate synthase regulatory protein (273 aa).

Residue 154–161 (GVSRSGKT) coordinates ADP.

It belongs to the pyruvate, phosphate/water dikinase regulatory protein family. PSRP subfamily.

The enzyme catalyses [pyruvate, water dikinase] + ADP = [pyruvate, water dikinase]-phosphate + AMP + H(+). It catalyses the reaction [pyruvate, water dikinase]-phosphate + phosphate + H(+) = [pyruvate, water dikinase] + diphosphate. Bifunctional serine/threonine kinase and phosphorylase involved in the regulation of the phosphoenolpyruvate synthase (PEPS) by catalyzing its phosphorylation/dephosphorylation. The chain is Putative phosphoenolpyruvate synthase regulatory protein from Halorhodospira halophila (strain DSM 244 / SL1) (Ectothiorhodospira halophila (strain DSM 244 / SL1)).